The chain runs to 445 residues: MTTILKGLPKGEKVGIAFSGGLDTSAALLWMKQKGARCFAYTANLGQPDESDYDEIPRKAMSFGAEKARLVDCRTQLVHEGIAAIQSGAFHISTGGATYFNTTPLGRAVTGTMLVAAMKEDGVNIWGDGSTYKGNDIERFYRYGLLTNPNLKIYKPWLDQQFIDELGGRAEMSAFLTANGFDYKMSAEKAYSTDSNLLGATHEAKDLENLNSGIRIVNPIMGVPFWREDCVVKPETVVVRFEEGQPVALNGQTFTDPVALFLEANAIGGRHGLGMCDQIENRIIEAKSRGIYEAPGMALLHIAYERLLTGIHNEDTIEQYRINGLRLGRLLYQGRWFDSQALMLRETAQRWVASAITGEVTLELRRGNDYSLLNTESPNLTYQPERLSMEKVEDAAFTPADRIGQLTMRNLDITDTRTKLKLYSETGLLTGSEGAQIFQLGHDKG.

ATP contacts are provided by residues 17-25 and alanine 43; that span reads AFSGGLDTS. Tyrosine 99 contacts L-citrulline. The ATP site is built by glycine 129 and threonine 131. Threonine 131, asparagine 135, and aspartate 136 together coordinate L-aspartate. Asparagine 135 serves as a coordination point for L-citrulline. Aspartate 136 is a binding site for ATP. L-citrulline-binding residues include arginine 139 and serine 192. Aspartate 194 is a binding site for ATP. 3 residues coordinate L-citrulline: threonine 201, glutamate 203, and glutamate 280.

This sequence belongs to the argininosuccinate synthase family. Type 2 subfamily. Homotetramer.

The protein localises to the cytoplasm. It carries out the reaction L-citrulline + L-aspartate + ATP = 2-(N(omega)-L-arginino)succinate + AMP + diphosphate + H(+). It functions in the pathway amino-acid biosynthesis; L-arginine biosynthesis; L-arginine from L-ornithine and carbamoyl phosphate: step 2/3. The sequence is that of Argininosuccinate synthase from Bradyrhizobium sp. (strain BTAi1 / ATCC BAA-1182).